Here is a 170-residue protein sequence, read N- to C-terminus: Odorant-binding protein 2a (170 aa).

Positions 1–15 are cleaved as a signal peptide; that stretch reads MKTLFLGVTLGLAAA. Cysteines 74 and 166 form a disulfide.

This sequence belongs to the calycin superfamily. Lipocalin family. As to quaternary structure, monomer. Strongly expressed in the nasal structures, salivary and lachrymal glands, and lung. Expressed in the liver.

It is found in the secreted. Binds and transports small hydrophobic volatile molecules with a higher affinity for aldehydes and large fatty acids, including undecanal, palmitic acid, efficient aldehydes, benzenic aldehydes, heterocyclic aldehydes and aliphatic acids. This is Odorant-binding protein 2a (OBP2A) from Homo sapiens (Human).